The following is a 224-amino-acid chain: Phosphoribosylformylglycinamidine synthase subunit PurQ (224 aa).

The Glutamine amidotransferase type-1 domain occupies 3 to 224 (FGVVVFPGSN…GLLEKVVALA (222 aa)). C86 acts as the Nucleophile in catalysis. Catalysis depends on residues H195 and E197.

As to quaternary structure, part of the FGAM synthase complex composed of 1 PurL, 1 PurQ and 2 PurS subunits.

It localises to the cytoplasm. The enzyme catalyses N(2)-formyl-N(1)-(5-phospho-beta-D-ribosyl)glycinamide + L-glutamine + ATP + H2O = 2-formamido-N(1)-(5-O-phospho-beta-D-ribosyl)acetamidine + L-glutamate + ADP + phosphate + H(+). It catalyses the reaction L-glutamine + H2O = L-glutamate + NH4(+). Its pathway is purine metabolism; IMP biosynthesis via de novo pathway; 5-amino-1-(5-phospho-D-ribosyl)imidazole from N(2)-formyl-N(1)-(5-phospho-D-ribosyl)glycinamide: step 1/2. Functionally, part of the phosphoribosylformylglycinamidine synthase complex involved in the purines biosynthetic pathway. Catalyzes the ATP-dependent conversion of formylglycinamide ribonucleotide (FGAR) and glutamine to yield formylglycinamidine ribonucleotide (FGAM) and glutamate. The FGAM synthase complex is composed of three subunits. PurQ produces an ammonia molecule by converting glutamine to glutamate. PurL transfers the ammonia molecule to FGAR to form FGAM in an ATP-dependent manner. PurS interacts with PurQ and PurL and is thought to assist in the transfer of the ammonia molecule from PurQ to PurL. The polypeptide is Phosphoribosylformylglycinamidine synthase subunit PurQ (Trichormus variabilis (strain ATCC 29413 / PCC 7937) (Anabaena variabilis)).